A 696-amino-acid polypeptide reads, in one-letter code: DNA ligase (696 aa).

Residues 55–59 (DYEFD), 105–106 (SL), and E137 each bind NAD(+). K139 serves as the catalytic N6-AMP-lysine intermediate. Residues R160, E194, K310, and K334 each contribute to the NAD(+) site. 4 residues coordinate Zn(2+): C428, C431, C446, and C451. In terms of domain architecture, BRCT spans 615 to 696 (NVNPNFVGKN…EFIELKDKFD (82 aa)).

This sequence belongs to the NAD-dependent DNA ligase family. LigA subfamily. Requires Mg(2+) as cofactor. The cofactor is Mn(2+).

The enzyme catalyses NAD(+) + (deoxyribonucleotide)n-3'-hydroxyl + 5'-phospho-(deoxyribonucleotide)m = (deoxyribonucleotide)n+m + AMP + beta-nicotinamide D-nucleotide.. Functionally, DNA ligase that catalyzes the formation of phosphodiester linkages between 5'-phosphoryl and 3'-hydroxyl groups in double-stranded DNA using NAD as a coenzyme and as the energy source for the reaction. It is essential for DNA replication and repair of damaged DNA. This chain is DNA ligase, found in Fusobacterium nucleatum subsp. nucleatum (strain ATCC 25586 / DSM 15643 / BCRC 10681 / CIP 101130 / JCM 8532 / KCTC 2640 / LMG 13131 / VPI 4355).